The following is a 273-amino-acid chain: Rhamnulose-1-phosphate aldolase (273 aa).

Glu-117 is a catalytic residue. Zn(2+)-binding residues include His-140, His-142, and His-211.

Belongs to the aldolase class II family. RhaD subfamily. It depends on Zn(2+) as a cofactor.

Its subcellular location is the cytoplasm. It catalyses the reaction L-rhamnulose 1-phosphate = (S)-lactaldehyde + dihydroxyacetone phosphate. Its pathway is carbohydrate degradation; L-rhamnose degradation; glycerone phosphate from L-rhamnose: step 3/3. In terms of biological role, catalyzes the reversible cleavage of L-rhamnulose-1-phosphate to dihydroxyacetone phosphate (DHAP) and L-lactaldehyde. The polypeptide is Rhamnulose-1-phosphate aldolase (Listeria monocytogenes serotype 4a (strain HCC23)).